A 202-amino-acid chain; its full sequence is Diadenylate cyclase (202 aa).

A helical membrane pass occupies residues 6 to 26; that stretch reads VFSVIILVLLFLILALTLLFV. Positions 29-185 constitute a DAC domain; sequence NKRTRSFVIR…RGVIKTLSSN (157 aa).

Belongs to the adenylate cyclase family. DacB/CdaS subfamily. Probably oligomerizes.

It localises to the cell membrane. The catalysed reaction is 2 ATP = 3',3'-c-di-AMP + 2 diphosphate. Catalyzes the condensation of 2 ATP molecules into cyclic di-AMP (c-di-AMP), a second messenger used to regulate differing processes in different bacteria. This Mycoplasma pneumoniae (strain ATCC 29342 / M129 / Subtype 1) (Mycoplasmoides pneumoniae) protein is Diadenylate cyclase.